Consider the following 790-residue polypeptide: LMBR1 domain-containing protein 2 homolog B (790 aa).

Residues methionine 1–serine 21 show a composition bias toward low complexity. Residues methionine 1–isoleucine 22 are disordered. 5 helical membrane passes run phenylalanine 34–glycine 54, isoleucine 66–valine 86, phenylalanine 128–serine 148, valine 167–valine 187, and phenylalanine 195–methionine 215. Positions leucine 236–threonine 266 form a coiled coil. The next 3 membrane-spanning stretches (helical) occupy residues phenylalanine 401–valine 421, proline 442–tyrosine 462, and phenylalanine 539–histidine 559. Disordered stretches follow at residues serine 630–serine 665, leucine 701–lysine 751, and serine 765–lysine 790. Residues isoleucine 644–serine 665 are compositionally biased toward polar residues. Over residues asparagine 706–serine 734 the composition is skewed to low complexity. Residues isoleucine 735–proline 746 are compositionally biased toward polar residues. Residues phenylalanine 766–glutamate 778 are compositionally biased toward acidic residues.

Belongs to the LIMR family.

It is found in the membrane. The chain is LMBR1 domain-containing protein 2 homolog B from Dictyostelium discoideum (Social amoeba).